A 232-amino-acid polypeptide reads, in one-letter code: Chaperone protein CssC (232 aa).

The N-terminal stretch at 1–20 (MKSKLIILLMLVPFSSFSTE) is a signal peptide.

Belongs to the periplasmic pilus chaperone family.

Its subcellular location is the periplasm. In terms of biological role, involved in the biogenesis of the CS6 fimbria. The protein is Chaperone protein CssC (cssC) of Escherichia coli.